Reading from the N-terminus, the 95-residue chain is ESAT-6-like protein EsxC (95 aa).

The protein belongs to the WXG100 family. ESAT-6 subfamily.

The protein resides in the secreted. This chain is ESAT-6-like protein EsxC, found in Mycobacterium tuberculosis (strain CDC 1551 / Oshkosh).